An 87-amino-acid polypeptide reads, in one-letter code: Cell division topological specificity factor (87 aa).

This sequence belongs to the MinE family.

Prevents the cell division inhibition by proteins MinC and MinD at internal division sites while permitting inhibition at polar sites. This ensures cell division at the proper site by restricting the formation of a division septum at the midpoint of the long axis of the cell. This is Cell division topological specificity factor from Vibrio parahaemolyticus serotype O3:K6 (strain RIMD 2210633).